A 417-amino-acid chain; its full sequence is Putative competence-damage inducible protein (417 aa).

This sequence belongs to the CinA family.

This is Putative competence-damage inducible protein from Shouchella clausii (strain KSM-K16) (Alkalihalobacillus clausii).